A 359-amino-acid chain; its full sequence is Putative nucleotidyltransferase MAB21L1 (359 aa).

A ribonucleoside 5'-triphosphate is bound by residues 23-24 (RK) and 63-66 (YEGL). Residues Glu73 and Glu75 each coordinate Mg(2+). Residues Lys248 and 252-255 (SILK) contribute to the a ribonucleoside 5'-triphosphate site.

This sequence belongs to the mab-21 family. Monomer. Homodecamer; composed of 2 back to back homopentamers. The protein may exist as monomer in solution and oiligomerizes upon ligand binding.

The protein resides in the nucleus. In terms of biological role, putative nucleotidyltransferase required for several aspects of embryonic development including normal development of the eye. It is unclear whether it displays nucleotidyltransferase activity in vivo. Binds single-stranded RNA (ssRNA). The sequence is that of Putative nucleotidyltransferase MAB21L1 (MAB21L1) from Bos taurus (Bovine).